We begin with the raw amino-acid sequence, 79 residues long: uncharacterized protein (79 aa).

This is an uncharacterized protein from Streptomyces lividans.